A 169-amino-acid polypeptide reads, in one-letter code: Lipoprotein signal peptidase (169 aa).

4 helical membrane passes run 4–24 (PICS…IVDL), 42–62 (LIPF…SFLA), 70–90 (WFFA…MYRS), and 102–122 (ALII…GAVI). Active-site residues include D123 and D141. Residues 137–157 (FNIADTAICIGAALVIFEGFI) form a helical membrane-spanning segment.

Belongs to the peptidase A8 family.

It localises to the cell inner membrane. The catalysed reaction is Release of signal peptides from bacterial membrane prolipoproteins. Hydrolyzes -Xaa-Yaa-Zaa-|-(S,diacylglyceryl)Cys-, in which Xaa is hydrophobic (preferably Leu), and Yaa (Ala or Ser) and Zaa (Gly or Ala) have small, neutral side chains.. Its pathway is protein modification; lipoprotein biosynthesis (signal peptide cleavage). Functionally, this protein specifically catalyzes the removal of signal peptides from prolipoproteins. This is Lipoprotein signal peptidase from Yersinia enterocolitica serotype O:8 / biotype 1B (strain NCTC 13174 / 8081).